The following is a 1332-amino-acid chain: Xanthine dehydrogenase/oxidase (1332 aa).

A 2Fe-2S ferredoxin-type domain is found at 4–91; that stretch reads DELVFFVNGK…HVAVTTVEGI (88 aa). [2Fe-2S] cluster contacts are provided by Cys43, Cys48, Cys51, Cys73, Cys113, Cys116, Cys148, and Cys150. An FAD-binding PCMH-type domain is found at 229 to 414; that stretch reads FEGERVTWIQ…LSIEIPYSRE (186 aa). FAD contacts are provided by residues 257–264, Phe337, 347–351, Asp360, Leu404, and Lys422; these read LVVGNTEI and SLGGN. Cys535 and Cys992 are joined by a disulfide. Mo-molybdopterin is bound by residues Gln767 and Phe798. Residues Glu802 and Arg880 each contribute to the substrate site. Arg912 lines the Mo-molybdopterin pocket. Residues Phe914 and Thr1010 each coordinate substrate. Position 1079 (Ala1079) interacts with Mo-molybdopterin. The Proton acceptor role is filled by Glu1261.

The protein belongs to the xanthine dehydrogenase family. As to quaternary structure, homodimer. Interacts with BTN1A1. [2Fe-2S] cluster is required as a cofactor. The cofactor is FAD. Requires Mo-molybdopterin as cofactor. In terms of processing, subject to partial proteolysis; this alters the enzyme from the dehydrogenase form (D) to the oxidase form (O). Contains sulfhydryl groups that are easily oxidized (in vitro); this alters the enzyme from the dehydrogenase form (D) to the oxidase form (O). In terms of tissue distribution, detected in milk (at protein level).

It localises to the cytoplasm. It is found in the peroxisome. Its subcellular location is the secreted. The catalysed reaction is xanthine + NAD(+) + H2O = urate + NADH + H(+). The enzyme catalyses hypoxanthine + NAD(+) + H2O = xanthine + NADH + H(+). It catalyses the reaction xanthine + O2 + H2O = urate + H2O2. Can be converted from the dehydrogenase form (D) to the oxidase form (O) irreversibly by proteolysis or reversibly through the oxidation of sulfhydryl groups. Its function is as follows. Key enzyme in purine degradation. Catalyzes the oxidation of hypoxanthine to xanthine. Catalyzes the oxidation of xanthine to uric acid. Contributes to the generation of reactive oxygen species. This chain is Xanthine dehydrogenase/oxidase (XDH), found in Bos taurus (Bovine).